Consider the following 501-residue polypeptide: Cytochrome P450 71B3 (501 aa).

Residues 2-22 (SILLYFFFLPVILSLIFMKKF) form a helical membrane-spanning segment. C445 is a binding site for heme.

It belongs to the cytochrome P450 family. Heme serves as cofactor.

Its subcellular location is the membrane. The chain is Cytochrome P450 71B3 (CYP71B3) from Arabidopsis thaliana (Mouse-ear cress).